The chain runs to 449 residues: UDP-N-acetylmuramate--L-alanine ligase (449 aa).

113–119 (GSHGKTT) contacts ATP.

Belongs to the MurCDEF family.

It is found in the cytoplasm. The enzyme catalyses UDP-N-acetyl-alpha-D-muramate + L-alanine + ATP = UDP-N-acetyl-alpha-D-muramoyl-L-alanine + ADP + phosphate + H(+). It functions in the pathway cell wall biogenesis; peptidoglycan biosynthesis. Its function is as follows. Cell wall formation. The chain is UDP-N-acetylmuramate--L-alanine ligase from Hydrogenobaculum sp. (strain Y04AAS1).